The following is a 204-amino-acid chain: Holliday junction branch migration complex subunit RuvA (204 aa).

Residues 1-67 (MIAFLSGHLV…ETELVLYGFG (67 aa)) form a domain I region. The tract at residues 68–146 (SPAERDVFVE…HWRQGLENAD (79 aa)) is domain II. A flexible linker region spans residues 147-156 (RPLAGGPPPA). The domain III stretch occupies residues 156–204 (AIREEVEMALLALGYSLQEIQAALQALPSQPRPTEEWLRDAITYLSRQP).

Belongs to the RuvA family. In terms of assembly, homotetramer. Forms an RuvA(8)-RuvB(12)-Holliday junction (HJ) complex. HJ DNA is sandwiched between 2 RuvA tetramers; dsDNA enters through RuvA and exits via RuvB. An RuvB hexamer assembles on each DNA strand where it exits the tetramer. Each RuvB hexamer is contacted by two RuvA subunits (via domain III) on 2 adjacent RuvB subunits; this complex drives branch migration. In the full resolvosome a probable DNA-RuvA(4)-RuvB(12)-RuvC(2) complex forms which resolves the HJ.

Its subcellular location is the cytoplasm. Functionally, the RuvA-RuvB-RuvC complex processes Holliday junction (HJ) DNA during genetic recombination and DNA repair, while the RuvA-RuvB complex plays an important role in the rescue of blocked DNA replication forks via replication fork reversal (RFR). RuvA specifically binds to HJ cruciform DNA, conferring on it an open structure. The RuvB hexamer acts as an ATP-dependent pump, pulling dsDNA into and through the RuvAB complex. HJ branch migration allows RuvC to scan DNA until it finds its consensus sequence, where it cleaves and resolves the cruciform DNA. The chain is Holliday junction branch migration complex subunit RuvA from Synechococcus sp. (strain JA-3-3Ab) (Cyanobacteria bacterium Yellowstone A-Prime).